The sequence spans 1919 residues: Transcription initiation factor TFIID subunit 1 (1919 aa).

2 disordered regions span residues 1 to 25 (MAES…EDNS) and 143 to 169 (DDED…TEKR). A compositionally biased stretch (acidic residues) spans 143 to 158 (DDEDYDEEEEQEEEQA). The 77-residue stretch at 661–737 (MKIIVKSLGG…VHLIRTKVHL (77 aa)) folds into the Ubiquitin-like domain. Disordered stretches follow at residues 1287–1314 (DQKK…NIAL), 1408–1679 (MRTN…RPKE), and 1726–1746 (RSER…KKKL). Composition is skewed to basic and acidic residues over residues 1465-1476 (SVDEALKGDKLS), 1535-1547 (KPKE…ERRS), and 1555-1565 (SRERGESESHK). The span at 1566-1587 (PSVSGQPLSSTERNQAASSRHT) shows a compositional bias: polar residues. Residues 1628 to 1655 (RSKEMNDHDMSSLEESPRFESRKTKRMA) show a composition bias toward basic and acidic residues. A compositionally biased stretch (polar residues) spans 1661–1671 (QRQQSFRLSEN). The stretch at 1713–1750 (NEIAEIRRYEEVIRSEREEEERQKAKKKKKKKKLQPEI) forms a coiled coil. Residues 1726–1735 (RSEREEEERQ) are compositionally biased toward basic and acidic residues. Basic residues predominate over residues 1736–1745 (KAKKKKKKKK). The 118-residue stretch at 1794-1911 (KRRKKGEVGL…DDYEDQLKEA (118 aa)) folds into the Bromo domain.

This sequence belongs to the TAF1 family. In terms of assembly, component of the TFIID complex. TFIID is composed of TATA binding protein (TBP) and a number of TBP-associated factors (TAFs) whose MWs range from 14-217 kDa. Interacts with TAF7 and TAF14B, and (via N-terminus) with TBP1 and TBP2. In terms of tissue distribution, expressed in roots, leaves and inflorescences.

It is found in the nucleus. Functionally, TAFs are components of the transcription factor IID (TFIID) complex that is essential for mediating regulation of RNA polymerase transcription. Core scaffold of the TFIID complex. The polypeptide is Transcription initiation factor TFIID subunit 1 (TAF1) (Arabidopsis thaliana (Mouse-ear cress)).